Reading from the N-terminus, the 546-residue chain is Alpha-taxilin (546 aa).

Disordered regions lie at residues 1–170 (MKNQ…GLGK) and 482–546 (NKRV…SARA). Over residues 11–21 (AKQSNPKSSPG) the composition is skewed to polar residues. Basic and acidic residues-rich tracts occupy residues 70–80 (DVSEELSRQLE) and 143–158 (EEIR…DHRR). S72 bears the Phosphoserine mark. The stretch at 186–491 (EEKLAALCKK…NKRVQDLSAG (306 aa)) forms a coiled coil. S515 bears the Phosphoserine mark. Positions 530–546 (TEASGQTGPQEPTSARA) are enriched in polar residues.

This sequence belongs to the taxilin family. In terms of assembly, binds to the C-terminal coiled coil region of syntaxin family members STX1A, STX3A and STX4A, but not when these proteins are complexed with SNAP25, VAMP2 or STXBP1, suggesting that it interacts with syntaxins that do not form the SNARE complex. Ubiquitous, with much higher expression in heart, kidney, liver and pancreas.

May be involved in intracellular vesicle traffic and potentially in calcium-dependent exocytosis in neuroendocrine cells. The sequence is that of Alpha-taxilin (TXLNA) from Homo sapiens (Human).